We begin with the raw amino-acid sequence, 88 residues long: MQAARFVVSGVVQGVWYRASTRQRAVALGLVGHARNQADGSVEVVAAGSAAALDALEAWLWQGPPAATVAAVTRTACAVPPTEDFVTG.

The Acylphosphatase-like domain maps to 3-88; it reads AARFVVSGVV…VPPTEDFVTG (86 aa). Active-site residues include arginine 18 and asparagine 36.

It belongs to the acylphosphatase family.

The enzyme catalyses an acyl phosphate + H2O = a carboxylate + phosphate + H(+). In Xanthomonas euvesicatoria pv. vesicatoria (strain 85-10) (Xanthomonas campestris pv. vesicatoria), this protein is Acylphosphatase (acyP).